The sequence spans 154 residues: UPF0260 protein HI_1355 (154 aa).

This sequence belongs to the UPF0260 family.

This is UPF0260 protein HI_1355 from Haemophilus influenzae (strain ATCC 51907 / DSM 11121 / KW20 / Rd).